We begin with the raw amino-acid sequence, 350 residues long: Carbamoyl dehydratase HypE (350 aa).

Cysteine 350 carries the post-translational modification S-carbamoylcysteine. Cysteine 350 carries the S-cyanocysteine modification.

The protein belongs to the HypE family. In terms of processing, modified by HypF, which adds a carboxamido group to the thiolate of the C-terminal cysteine, yielding a protein-S-carboxamide. The carboxamido group is then dehydrated by HypE itself to yield a protein-thiocyanate.

The enzyme catalyses C-terminal S-carboxamide-L-cysteinyl-[HypE protein] + ATP = C-terminal S-cyanate-L-cysteinyl-[HypE protein] + ADP + phosphate + H(+). Its pathway is protein modification; [NiFe] hydrogenase maturation. In terms of biological role, involved in the maturation of [NiFe] hydrogenases. Along with HypF, it catalyzes the synthesis of the CN ligands of the active site iron of [NiFe]-hydrogenases. HypE catalyzes the ATP-dependent dehydration of the carboxamido group attached to its C-terminal cysteine to a cyano group. The chain is Carbamoyl dehydratase HypE from Rhizobium leguminosarum bv. viciae.